The primary structure comprises 248 residues: 14-3-3 protein sigma (248 aa).

Phosphoserine occurs at positions 5, 74, and 248.

The protein belongs to the 14-3-3 family. In terms of assembly, homodimer. Interacts with KRT17 and SAMSN1. Found in a complex with XPO7, EIF4A1, ARHGAP1, VPS26A, VPS29 and VPS35. Interacts with GAB2. Interacts with SRPK2. Interacts with COPS6. Interacts with COP1; this interaction leads to proteasomal degradation. Interacts with the 'Thr-369' phosphorylated form of DAPK2. Interacts with PI4KB. Interacts with SLITRK1. Interacts with LRRK2; this interaction is dependent on LRRK2 phosphorylation. Interacts with PKP3 (via N-terminus); the interaction maintains the cytoplasmic pool of PKP3, facilitates PKP3 exchange at desmosomes and restricts PKP3 localization to existing desmosome cell junctions. Interacts with LCP2. Ubiquitinated. Ubiquitination by RFFL induces proteasomal degradation and indirectly regulates p53/TP53 activation. Present mainly in tissues enriched in stratified squamous keratinizing epithelium.

The protein resides in the cytoplasm. It localises to the nucleus. It is found in the secreted. Its function is as follows. Adapter protein implicated in the regulation of a large spectrum of both general and specialized signaling pathways. Binds to a large number of partners, usually by recognition of a phosphoserine or phosphothreonine motif. Binding generally results in the modulation of the activity of the binding partner. Promotes cytosolic retention of GBP1 GTPase by binding to phosphorylated GBP1, thereby inhibiting the innate immune response. Also acts as a TP53/p53-regulated inhibitor of G2/M progression. When bound to KRT17, regulates protein synthesis and epithelial cell growth by stimulating Akt/mTOR pathway. Acts to maintain desmosome cell junction adhesion in epithelial cells via interacting with and sequestering PKP3 to the cytoplasm, thereby restricting its translocation to existing desmosome structures and therefore maintaining desmosome protein homeostasis. Also acts to facilitate PKP3 exchange at desmosome plaques, thereby maintaining keratinocyte intercellular adhesion. May also regulate MDM2 autoubiquitination and degradation and thereby activate p53/TP53. The polypeptide is 14-3-3 protein sigma (SFN) (Homo sapiens (Human)).